A 281-amino-acid polypeptide reads, in one-letter code: Undecaprenyl-diphosphatase (281 aa).

The next 8 membrane-spanning stretches (helical) occupy residues 2 to 22 (FDLI…FLPV), 46 to 66 (AFSS…VIQL), 93 to 113 (VIVG…FMDA), 115 to 135 (LMNF…FIVI), 152 to 172 (ITFK…VPGT), 190 to 210 (FVAA…VTFL), 228 to 248 (IVML…IKFM), and 259 to 279 (VFGY…ILGI).

This sequence belongs to the UppP family.

Its subcellular location is the cell membrane. It catalyses the reaction di-trans,octa-cis-undecaprenyl diphosphate + H2O = di-trans,octa-cis-undecaprenyl phosphate + phosphate + H(+). Catalyzes the dephosphorylation of undecaprenyl diphosphate (UPP). Confers resistance to bacitracin. The sequence is that of Undecaprenyl-diphosphatase from Leuconostoc mesenteroides subsp. mesenteroides (strain ATCC 8293 / DSM 20343 / BCRC 11652 / CCM 1803 / JCM 6124 / NCDO 523 / NBRC 100496 / NCIMB 8023 / NCTC 12954 / NRRL B-1118 / 37Y).